The sequence spans 109 residues: Large ribosomal subunit protein uL24 (109 aa).

It belongs to the universal ribosomal protein uL24 family. Part of the 50S ribosomal subunit.

One of two assembly initiator proteins, it binds directly to the 5'-end of the 23S rRNA, where it nucleates assembly of the 50S subunit. In terms of biological role, one of the proteins that surrounds the polypeptide exit tunnel on the outside of the subunit. This is Large ribosomal subunit protein uL24 from Rickettsia canadensis (strain McKiel).